Here is a 437-residue protein sequence, read N- to C-terminus: Enolase (437 aa).

Positions 160 and 169 each coordinate substrate. Catalysis depends on E212, which acts as the Proton donor. D247, E296, and D321 together coordinate Mg(2+). The substrate site is built by E296 and D321. K346 (proton acceptor) is an active-site residue. Residues 373-376 and K397 contribute to the substrate site; that span reads SHRS.

This sequence belongs to the enolase family. Homodimer. Mg(2+) serves as cofactor.

It is found in the cytoplasm. The catalysed reaction is (2R)-2-phosphoglycerate = phosphoenolpyruvate + H2O. The protein operates within carbohydrate degradation; glycolysis; pyruvate from D-glyceraldehyde 3-phosphate: step 4/5. The polypeptide is Enolase (ENO) (Eremothecium gossypii (strain ATCC 10895 / CBS 109.51 / FGSC 9923 / NRRL Y-1056) (Yeast)).